The sequence spans 161 residues: Thy-1 membrane glycoprotein (161 aa).

A signal peptide spans 1–19 (MNLAISIALLLTVLQVSRG). A Pyrrolidone carboxylic acid modification is found at Gln20. One can recognise an Ig-like V-type domain in the interval 20 to 126 (QKVTSLTACL…SQNVTVLRDK (107 aa)). 2 cysteine pairs are disulfide-bonded: Cys28–Cys130 and Cys38–Cys104. 2 N-linked (GlcNAc...) asparagine glycosylation sites follow: Asn42 and Asn79. Phosphoserine is present on Ser82. A glycan (N-linked (GlcNAc...) asparagine) is linked at Asn119. Cys130 is lipidated: GPI-anchor amidated cysteine; alternate. Positions 131–161 (EGISLLAQNTSWLLLLLLSLSLLQATDFMSL) are cleaved as a propeptide — removed in mature form. N-linked (GlcNAc...) asparagine glycosylation occurs at Asn139.

The protein resides in the cell membrane. In terms of biological role, may play a role in cell-cell or cell-ligand interactions during synaptogenesis and other events in the brain. This chain is Thy-1 membrane glycoprotein (THY1), found in Homo sapiens (Human).